A 271-amino-acid polypeptide reads, in one-letter code: Repressed by EFG1 protein 1 (271 aa).

The signal sequence occupies residues 1 to 19 (MKITNTLLNAAALLAVTEA). Residues 59 to 118 (QLTSKTQDSTSPTTSSVNSLTSSSATSYVETTTPAPSSSTLTTSTISSSTASEDSDATPT) form a disordered region. The segment covering 67–118 (STSPTTSSVNSLTSSSATSYVETTTPAPSSSTLTTSTISSSTASEDSDATPT) has biased composition (low complexity). The region spanning 128–244 (LKEHNVKRAL…AWRQITVCEY (117 aa)) is the SCP domain. N-linked (GlcNAc...) asparagine glycosylation occurs at N254.

Belongs to the CRISP family.

The protein localises to the secreted. It localises to the cell wall. Functionally, cell wall protein involved in cell wall integrity and which plays a role in virulence. The polypeptide is Repressed by EFG1 protein 1 (RBE1) (Candida albicans (strain SC5314 / ATCC MYA-2876) (Yeast)).